We begin with the raw amino-acid sequence, 254 residues long: Cdc42 effector protein 3 (254 aa).

Positions 31–45 constitute a CRIB domain; the sequence is ISPPLGDFRHTIHIG. Tyr63 carries the post-translational modification Phosphotyrosine. A phosphoserine mark is found at Ser89, Ser108, and Ser144. The interval 165–205 is disordered; that stretch reads VHQGDTSWGSSGSGSQSSQGRDSHSSSLSEQSSDWPADDMF. The span at 171–197 shows a compositional bias: low complexity; sequence SWGSSGSGSQSSQGRDSHSSSLSEQSS.

This sequence belongs to the BORG/CEP family. As to quaternary structure, interacts with RHOQ and CDC42, in a GTP-dependent manner, and with SEPT7.

Its subcellular location is the endomembrane system. It localises to the cytoplasm. The protein localises to the cytoskeleton. Functionally, probably involved in the organization of the actin cytoskeleton. May act downstream of CDC42 to induce actin filament assembly leading to cell shape changes. Induces pseudopodia formation in fibroblasts. The protein is Cdc42 effector protein 3 (Cdc42ep3) of Mus musculus (Mouse).